We begin with the raw amino-acid sequence, 7192 residues long: MTPSRSLENGEKQMNWNESPQTASPKNVLRDSNSNGNYVNGHGTNINGDGSDGVGNGINANGSATKINGNGTYTNGNGAHTNGNGVHTNGHGISLESQTSDSKVHSTSKFKEEFRAICAKVLKIDIEELDDTCSFVSLGGDSISAIKLVTECEVRGIELKTVDVISTHTISGLFATANFRPFGKHSNGKTGISYSRNQEDDDPSPFALWTAHRDSDLIEKRQRLEEIAVLCGVETEEIEDVYPCTPLQEGLIAITTRQPTAYVQRRVCRLTNEIDLERFWAAWETLVANVASLRTRIIMGPGGQSLQVVIREKLLWRRGSNLGRYLSRDRADGMMLGQPLARFGRIQEETGSFFVWTAHHSIFDGWSALLLYRQLLAIYQQSYVPRLVPFSRFLRYLAEQDSTAATRYWHSQLHGDTMADWPALPSSNYQPQPQHVFRSSINLPHGYKPGTIMISNLLRAAWALVMAQYSGNDDVIFAVTVSGRSAPVSQIADIIAPTITTVPVRIRIDRSMSIAELLLEIQSQAAKMIEHEHTGLQTIKKLLPEFGTALELRNLLIVQPEAESDDYVYKEFPGLEAIREAMEDFDNYGLNVECILGSQSIEVLVNYDDHVINTMHLRDVMGQFTYTVQCLCNPSVSKLSVNDVATIKTSDQQRILEWNEHIPPSVDRCIHHLVQDQVNIQPAKLAVDAWDGKYTYADLARESISLAHHLVGLGLGPEQPVGLCGSVLPLGVSHPFARTSGIVQEAKVRIVLVDESQRTELAKLATTLIVVDSELIAALPSEAKPPETGVTPENVAWILFTSGSTGTPKGVVLQHASLCTSLIGHANTVGINKYTRTFQFAAFTFDVSLCDIFSTLQAGGCVCMPSEDERMNSLAEAASRMEVNYAELTSTVTETISPSQVPSLATLALSGEALKPSVLSTWARHSSVFNSYGPTECSIVASNSKRLSNVEEAQNIGGPMSSIFWVVQAANFHQLCPIGAPGELLIEGPLLARGYLNDEVKTEKAFIIDPDFTKQLGLSPGRRMYRTGDLVRQNQDGSLMYLGRCDSTQVKVRGQRVEVSEIEYQISRQLPEIQTVAVEMLQRGTQASLVAVVNFAMDSKYAAPAAFDTTTTKTETIFSTDALRAVFQDLQLALSQVLPAYMIPTLYAPMSTIPMNASGKLDRRVLRTKLDSMSFDELRVYMADDGPKAAPSTDAEKQVQSLWSEVLAINPQDIALSDNFFRIGGDSIAAMRMVALKASRRLRLTVADVFQHPQLSDLAFVIQRRLQMVEDGVQEEDSAPFDLWAKFKVDGLDSTKRAQELAIIATRCDIRVDDIEDIYPCTPLQEGLIAITTHQPTAYVSRQIYKLAPTLDVVRFQKAWQTLAQVTPILRTRILAGLDTSDVSLQVVVRGSITWQYGADSGTLSDYVAQDRKSGMRLGQPLVRFGLVRNSSEQFFIWTAHHSVYDGWSVSLMYQHLYDIYFDQRIPSTIPYARFIRYLIRHDDAASEKYWRSQLQGEVVSNWPPLPRADYQPRPQQRYTCDIILPDHTMNDRVNSLLPSVLRAAWGVTMSKYTGQGDVVFGVTLLGRNAPVSQITEMTGPTITTVPVRIHLDGPQPLTINQFLQNVQKQAADMINYEHAGLQVIKKLVPELNSSLELRNLLVIQPASETDGTAFPGLDPLPVDLEGFDSYGLTIECSILSGLVKVEARYDENVIATPQLKRTIRTFEHVVKQLLDVRNSVYRLEEMSWLSDYDEEAIANWSKATPIRVERCIHELVQEQTKLRPNATAICAWDGNLTYAELDMQATWLARYLTSLGACSQRMVGICMDKSKWAGVSMLAVLKAGAVLVPLGVNHPEARIKAMVDDTDTQIILVDEKQRDRLSIQGVRLITVDADILKKLPVLAEKEELLGSVNPDDAAWVIYTSGSTGKPKGVVLQHVALCSSIQAHGARFGMGTSTRMLQFAAHTFDACIQDYFTTLSWGGVVCVPSENDRMSDLTTAMCQMKVTFATLTSTVARLIDPHKVPSMQKLALVGEPVKADVVKQWLGHTIVLNAYGPSECSIHSSCGEPLADSTKSAVIGTGMGTRLWVVDVDYNQLCPIGAPGELLIEGPLLAREYLNDPRKTKAAFVSDPRFAQKFGLAPGTRMYRTGDLVKQNEDSSITHLGRRDTQIKIRGQRVEVGEIEFQIAQHPQVRTVAVELLEQDSNGSQVILTAVIEFTEDSEYRNGPVTSSGLLTLTPSLSLAFEMLRGALFQVLPSYMLPSMYVPIVDMPMNVNGKLDRRAVRDLLQAMTPDVRQQYLSASDHKVAPSTREECLVHSLWTEALSLSFSQVGIYDNFFQIGGDSVVAMRMVATESARELQLTVADLFQHPRLIELAELLAKRSVDKKVEADPEPFSLWLEPQIGSEQQQEKLTMVAKQCGISVNHVEDVYPCTPLQVGLMAITARQPLAYIDRQVYKLADTIDLDRFQAAWRALSDATPILRTRIITSEGPQSFLQVVVGGCDPWRDSNDLEDYMASDRDVGIALGKPLVRMGLVRERNSEERYFVWTAHHSVYDGTSALLMYQQLASIYFHGSLLPTAPFTRFIRYLARKEVIAAESAAYWADQLQGEVMANWPPLPRIDYQPKPQHEMTQIFRLPQFESRSVVTISNVIRAAWALVMAQRTGHSDVVFAVTVSGRNAPISQVDSIIAPTISTVPVRVQIDWTQDVAGFLFAIQNQAAQMIDYEHTGLRAIKALVPELGPTLDIRNVLVVQTAEERGAADHFPGIEALPQGKENFDSYGLLTECTLGTDGEVRIDFRYDDNVIPSSSIKRISAQFAHLVQQLCGNATSTLHRLNELVLIAPEDQEQIMKWNPMLPPRVDSCIHELFYKQVMARPQAEAVSGWDGELSYSDLADESIRLAYQLISLGIGPEMKVGLCIDKSKWAIIAIMSILFAGGVVVPLGVTHPLPRLDVVIEDASIDLILVDQHQRKRLAALSQNVKLITVNDALLRTLPVHTEPPVTGVVSRNAAWIIYTSGSTGTPKGVVLEHGGCCTSMRTQGKKMNLSAETRALQFTPFTFDVSISDVSATLIYGGCICVISESDRVNNLPGAIREMKVNFASLTPTVAQMLSPAELPSLKTLALTGEAVKPEVVELWMNSVALYDTYGPSEGSVCTCNGPLSSPDQADNIGFPMSTLHWVTQLHNHNQLCPIGAPGELLIEGPLLARGYLNQARTKESFVNDPAFTKQQTGLPSARHIYRTGDLVRQNEDGSFIYLGRRDDQIKIRGQRVEVGEIEYQIVCELPGTHSAAVAMLQDGKNISLIAIVDFKSDSEHYPGELESLGTLAPTPQLRAAFNELRQSLTKLLPSYMVPAIFVPVVQMPTNISGKLDRLGVRALLRAIPSDHLARYMIDETLPSETPSTKMEKVIQSLWAEALDIPMDNISAHDNFFQIGGDSVTAMRIVAATTRTNQLQLTVSDIFQNPKLSDLASVMTEHRKNHFDVMDEDPEPFSLWEAVISDNSNEQKRQIEAIAQQCNVSVDDIEDIYPCTALQEGLLAVTARQTSAYVSRQAYVLSDQIDISRFKEAWRKLVAGIHILRTRAVVGPDSLLQVVVRDEITWRHGSNLEDYIQQDKEEGIRLGQPLSRYGLVQLPSGEQVFVWTAHHSIYDGWTIRLMCRQLISLYRQEEDISTSIPYSRFIQYLTQINIEDSIEYWREQLRGESVTANWPSLPQPNYEPRPRHLLRKHISLPRTENQGIVMSNILRAAWGLVMIQYSGENDVVYAANLSGRNVPVRDVAEICAPTITTVPIRLRLDHTSTQTVGDFLQNIQQQAIEMINHEHTGLQVIKSLAPELSDSVLKLRNLLVIQPAAESDTHLDFPGIELVPSDIADFDAYGVNIECTLGQEIAVEARYDENVVETPYMNGVLDQFVYIVGLLCDPSISRWNATVPERVTKCIHELVQEQALARPTALAVQAWDGKLTYGELDNLANRLAHQLVSFGIGSLPDQMVGVCMEKSLFAVVAMLAVLKAGGVVVPLGVTHPITRLDTIIHDTGITVLLVDASQDERLAELSPTRILVNSDHLYHYLPARTQPPKTPVNHMDAAWVIYTSGTTGTPKGAVSEHGTLSTSIKAHGARYGFGHHTRKLNYAAHTFDGTIEDFFTTLSWGGVCCIPSEEDRMDKYKLMEFMNLTKVNSAAMTYTVASLLSPRDLPTLHTLVLGGEPATIDVVSTWMTEVNLFNCYGPSECSIFSAAAGPTKNTNELHNIGFPIGTRLWVADIENYHKLAPIGAPGELLIEGPQLARGYLNDESKTSAAFIVDPAFTTHFKLPLGTRMYRSGDIVRQKNDGSLVYVARRDMQVKIRGQRVEIGEIESQISQHISEARTIAVELLKLGTQSQPVLVAAVEFADGSQYHTGDVTSFGMLAPTEAIREAFIKLRGTLFQVLPGYMVPSAYLTIAEMPRNISGKLDRKTLRTMLEAIPADAIQQYLDGEAKTLPSTQVELQLQALWAEALGISVDGVGAHDNFFQLGGDSVAAMRIVAMSQAREMGLSVADIFAYPRLSELAVILDGRKNSNEVFYSDPEPFALWPRATNKVLDENTLLADIASKCNVTVNQIEDIYPCTPLQEGMIAITARQSAAYVSRQIYALDTTVIELGKFQRAWQVLANATPILRTRLVITQNGQSMQVVLRDTIAWRHSTDLDAYVNEDRAEGISLGQPLLRYSLVKQITGECFFVWTAHHSIYDGWTMRSICQRLVEMYNNIDNSSYQMPQSVPYSRFIHYLTQSDKSAAATFWRQQLHGDIMADWPSLPSIDYQPKPQHRDRKTIRVAGSTSKNILTSNILRAAWALLMSQYTGHPDVVFAASVSGRNAPVWQIGEIAGPTLTTVPVRVQAKPGMTVRQFIQEVQEQSTAMIRFEHTGLQNIKALVPEAAMALELRNVLVVQIAEESDHRIDFPGLEALPMPFEDFDSFGIHLECTPGLDDIEVEARYDVNIVSAPHMKRVLNQFEYVVQKFHDSEYSDFSLQSIQLNPHDERQILEWNATVPSHTERCVHNLVDDHVAARPMAPAICGWDGDLTYRELSRIATSLAFHLQHELGVGPEQKVGVCMDKSKWAVVAMLAVMYAGGVVVPLGVAHPLTRIRGILIDSASSVVLVDATQRERLVDLHTSLICVDAKLIARLSSQNQKQNQTQKLQVEVTPGNLAWVVYTSGSTGKPKGVMLEHRALSTALQAHGSAFGMDTNTRTIQFAAHTFDAAIQDIFTTFSKGGCVCIPSEHDRVNNLTKAMASMNVNFANFTSTVASMLVPEELPSLKTMILAGEAVTPTAVGLWSQHVTIFNSYGPSECSINSSCSKPVKEVSQASNVGLPLSCCFWVTNTTDYNSLCPIGAPGELLIEGPIQARGYLNDKEQTNKSFVTDPGFTKKLGLSGRRMYRTGDLVRQNADGTLTYLGRQDLQVKIRGQRVEIGEIEYQIKKKLLGARTVAVEKIEQGGHSEQTRLVTMMDFKDTSEHSHNPDILASGALSPTPKLQTAFEKLRQSLSEVLPSYMVPTFYVPVAQMPVNASNKLDRRAVKAVLASLTPDALQQYLPGGTDTKQAPDTDLGRLIQGLWADALGISTDTISMTDNIFHLGGDSVTAMRIVAAAYSHELQLTVTDIFQHPQLADLVNTLSNRSLERNTEIQEDPMAFELWEEAASCSTEERKRLLTEVAAQCGVAVSHIEDVYPSTPLQEGLMAITARQPAAYVSRQVYTLAKTVDQLKFKMAWQALSSEAHILRTRLLVAPHGLQVVVNDRIDWHHGTDLENYLQADRRAGMSPGKPLVRYGLIKQPSGETFFVWTSHHSLYDGWTLRSLGKRLLDLYNDGSPQSFVPFSRFIRYLQFGRPGNDDTATYWRNELEGDIVTDWPSLPRSDYQPLPRDNFSRAITLPDSHHSGSVVMSNVIRAAWALVMSQYAGHNDVAFAATVSGRNAPVWQIEDIPAPTITTVPLRISVDPMQTVAEFLDTVQQQAVRMIDYEHTGLQGIKALAPDLGPAIDLRNLLVVQPAADSDSNVQLDFPGLGSVSMPIEPFNSYGLTVECKLASHEIVVDVHYDKDVISSAQLKRVIDFFACVVQRILTQSPRSYRIQEIVAIGEEDLQQVLAWNSTIPPNVDKCIHEMVQAQVKKSPAALAISAWDGDLTYEEFFKSSARLAHHLVALGVNTGSNIGICMDKSKWGPVSMLSIMQAGAAIMPLGTSHPLARIETIVRNSEASVIIVDEKQRQRLDQLYTETSLTLVTVDSKFFKQLPAQTKAPSTGVRPSDASWLIHTSGSTGVPKGVIIDHVTMSTSLRAQGSWLGLNQKSRFLQFSNYTFDNVITDTFATTVFGGCVCVPSEDARMNNLPGFMATANVNVAMLTSTVARQISPSQVPSLHTLILTGEPVRADVVSTWLGHADIYNAYGPTEGSMSTCTKPMMRSDQVSNIGYPLATRAWITQPDHIQLSPIGAPGELFIEGPLLARGYLNNPEMTRDSFIINPEFTKRLGLENRRVYRTGDLVRQNEDGSLIYLGRRDLQVKIRGQRVEVGEIELQIIKHTPGAELVAVELIQQKDTKEEKRNLIAAIEFAKDSEHCHGSQNTPGPQILAPTDALRDDFARLRGLLYQVLPSYMIPSAFIPTTNLDRNLSGKLDRKGLRGLLEALSSQQLRQYSASGGSKVNPSTTMERQLQTLWAEALGIPADQVGAHDNFFQIGGDSMVAMRVVAASHSKDLNLRVNDIFQHSCLSDLAVVLTDRLAHNFNGGQDGHAPFSLIKTDDIDDFLQQIASSVVGCAIQDIVDILPTTDFQSSIIDTALAAPKSGTSHFLLDGNGPCDTRALKKSCLELIQATDTLRTGYVFDQGNLLQVIQAYFEPEIKIYETDSTIEAVTEDIVSRDMYQPIGLGRPFTQIAIIRETATLKHRVLLRLTHAEYDAHSMGSIWQNLRSLYEGGSTRPQAKFSDFLYNQRQSINADTYDYWRDLLKGSSMPAINLSAKKIGQYPSKVNQDLFRTIETPDLMVEGRTSAMLVKSAWSLVLSQFLRVNDVVFADTVSTRTTVDSSLMDAMGCCVTLIPFRVTLEQQWTIKDLLDNVRDQQSQSMQHSQLGFREILRECTDWPASTRFTSALNHISSGPESSIFSMRGVEYSISEMEIKDPLWEIDVGITTIQRGSELEIRLSYLPANISESVATSLLDALHNTLQFIHNNPLSPVKQVLSFHTDMKIQNGSSN.

The segment covering 1-48 (MTPSRSLENGEKQMNWNESPQTASPKNVLRDSNSNGNYVNGHGTNING) has biased composition (polar residues). The interval 1-52 (MTPSRSLENGEKQMNWNESPQTASPKNVLRDSNSNGNYVNGHGTNINGDGSD) is disordered. The region spanning 105–181 (HSTSKFKEEF…GLFATANFRP (77 aa)) is the Carrier 1 domain. The residue at position 142 (serine 142) is an O-(pantetheine 4'-phosphoryl)serine. The tract at residues 239–634 (EDVYPCTPLQ…TYTVQCLCNP (396 aa)) is condensation 1. Residues 675-1047 (QDQVNIQPAK…SLMYLGRCDS (373 aa)) are adenylation 1. Residues 1190 to 1266 (APSTDAEKQV…DLAFVIQRRL (77 aa)) form the Carrier 2 domain. The residue at position 1227 (serine 1227) is an O-(pantetheine 4'-phosphoryl)serine. The interval 1316 to 1736 (EDIYPCTPLQ…MSWLSDYDEE (421 aa)) is condensation 2. The segment at 1758-2154 (QEQTKLRPNA…GRRDTQIKIR (397 aa)) is adenylation 2. The Carrier 3 domain occupies 2288 to 2364 (APSTREECLV…ELAELLAKRS (77 aa)). Serine 2325 carries the O-(pantetheine 4'-phosphoryl)serine modification. Residues 2407-2829 (VEDVYPCTPL…LIAPEDQEQI (423 aa)) form a condensation 3 region. An adenylation 3 region spans residues 2849-3245 (YKQVMARPQA…GRRDDQIKIR (397 aa)). The Carrier 4 domain occupies 3378–3455 (TPSTKMEKVI…DLASVMTEHR (78 aa)). At serine 3415 the chain carries O-(pantetheine 4'-phosphoryl)serine. Positions 3502–3891 (EDIYPCTALQ…NGVLDQFVYI (390 aa)) are condensation 4. Positions 3920–4320 (QEQALARPTA…ARRDMQVKIR (401 aa)) are adenylation 4. The region spanning 4453-4529 (LPSTQVELQL…ELAVILDGRK (77 aa)) is the Carrier 5 domain. The residue at position 4490 (serine 4490) is an O-(pantetheine 4'-phosphoryl)serine. The interval 4574 to 4971 (EDIYPCTPLQ…QFEYVVQKFH (398 aa)) is condensation 5. Residues 5013–5414 (DDHVAARPMA…GRQDLQVKIR (402 aa)) are adenylation 5. Residues 5551–5627 (APDTDLGRLI…DLVNTLSNRS (77 aa)) enclose the Carrier 6 domain. The residue at position 5588 (serine 5588) is an O-(pantetheine 4'-phosphoryl)serine. The interval 5674–6071 (EDVYPSTPLQ…CVVQRILTQS (398 aa)) is condensation 6. The tract at residues 6111 to 6507 (QAQVKKSPAA…GRRDLQVKIR (397 aa)) is adenylation 6. One can recognise a Carrier 7 domain in the interval 6645–6721 (NPSTTMERQL…DLAVVLTDRL (77 aa)). Serine 6682 bears the O-(pantetheine 4'-phosphoryl)serine mark. The condensation 7 stretch occupies residues 6795 to 7178 (NGPCDTRALK…NPLSPVKQVL (384 aa)).

Belongs to the NRP synthetase family.

The protein operates within mycotoxin biosynthesis. Its function is as follows. Nonribosomal peptide synthetase; part of the gene cluster that mediates the biosynthesis of pneumocandins, lipohexapeptides of the echinocandin family that prevent fungal cell wall formation by non-competitive inhibition of beta-1,3-glucan synthase. The 10,12-dimethylmyristoyl side chain is synthesized by the reducing polyketide synthase gloL/GLPKS4. The thioesterase gloN/GLHYD exclusively interacts with gloL/GLPKS4 to maintain turnover of the polyketide side chain. The 10R,12S-dimethylmyristic acid is then transferred to the first thiolation domain of the nonribosomal peptide synthetase gloA/GLNRPS4 by the acyl-AMP ligase gloD/GLligase, followed by its acylation to L-ornithine to trigger elongation of the cyclic hexapeptide. L-ornithine, 4R-hydroxyl-L-proline (generated from L-proline by the dioxygenase gloF/GLOXY2), 3S-hydroxyl-L-homotyrosine (generated by gloG/GLHtyB, gloH/GLHtyA, gloI/GLHtyC, gloJ/GLHtyD and hydroxylated at C-3 by the dioxygenase gloM/GLOXY1), 3R-hydroxyl-L-glutamine (generated from L-glutamine probably by the dioxygenase gloE/GLOXY3) and 3S-hydroxyl-L-proline (generated from L-proline by the dioxygenase gloF/GLOXY2 to yield pneumocandin B0), or 3S-hydroxyl-4S-methyl-L-proline (generated from L-leucine by the dioxygenase gloC/GLOXY4 to yield pneumocandin A0) are sequentially added to the growing chain. The last C domain of gloA/GLNRPS4 is proposed to be responsible for cyclization by condensation to form the peptide bond between L-ornithine and 3S-hydroxyl-4S-methyl-L-proline (for pneumocandin A0) or 3S-hydroxyl-L-proline (for pneumocandin B0). Finally, the subsequent C-4 hydroxylation of 3S-hydroxyl-L-homotyrosine and L-ornithine dihydroxylation at C-4 and C-5 are performed by the cytochrome P450 monooxygenases gloP/GLP450-1 and gloO/GLP450-2, respectively. This is Nonribosomal peptide synthetase gloA from Glarea lozoyensis (strain ATCC 20868 / MF5171).